The chain runs to 547 residues: MLRHILTAKNLLSNPIFKFPNCLPFLSTVCCICRQFVGENLCSFADSPSLFEMWFHFLQLRSALNISSALRQVVHGTRWHAKRKSYKVLFWREITPLAVPIFMENACVLLMGVLSTFLVSWLGKDAMAGVGLADSFNMVIMAFFAAIDLGTTVVVAFSLGKRDRRRARVATRQSLVIMTLFAVLLATLIHHFGEQIIDFVAGDATTEVKALALTYLELTVLSYPAAAITLIGSGALRGAGNTKIPLLINGSLNILNIIISGILIYGLFSWPGLGFVGAGLGLTISRYIGAVAILWVLAIGFNPALRISLKSYFKPLNFSIIWEVMGIGIPASVESVLFTSGRLLTQMFVAGMGTSVIAGNFIAFSIAALINLPGSALGSASTIITGRRLGVGQIAQAEIQLRHVFWLSTLGLTAIAWLTAPFAGVMASFYTQDPQVKHVVVILIWLNALFMPIWSASWVLPAGFKGARDARYAMWVSMLSMWGCRVVVGYVLGIMLGWGVVGVWMGMFADWAVRAVLFYWRMVTGRWLWKYPRPEPQKCEKKPVVSE.

The next 11 membrane-spanning stretches (helical) occupy residues 94–114, 139–159, 174–194, 211–231, 246–268, 281–301, 318–338, 350–370, 404–424, 439–459, and 486–506; these read ITPL…MGVL, VIMA…AFSL, SLVI…HFGE, LALT…ITLI, LLIN…YGLF, GLTI…AIGF, FSII…SVLF, AGMG…AALI, VFWL…PFAG, VVVI…ASWV, and VVVG…VWMG.

This sequence belongs to the multi antimicrobial extrusion (MATE) (TC 2.A.66.1) family.

It localises to the cell inner membrane. Functionally, a transporter able to export peptides and flavins. When overexpressed allows cells deleted for multiple peptidases (pepA, pepB, pepD and pepN) to grow in the presence of dipeptides Ala-Gln or Gly-Tyr which otherwise inhibit growth. Cells overexpressing this protein have decreased intracellular levels of Ala-Gln dipeptide, and in a system that produces the Ala-Gln dipeptide, overproduction of this protein increases its export. When overexpressed increases secretion of FMN and FAD but not riboflavin; intracellular concentrations of FMN and riboflavin rise, possibly to compensate for increased secretion. Increased overexpression causes slight cell elongation. In Escherichia coli (strain K12), this protein is Probable FMN/FAD exporter YeeO (yeeO).